Reading from the N-terminus, the 422-residue chain is Glycine amidinotransferase, mitochondrial (422 aa).

The transit peptide at 1 to 37 (MLRVRCLRGGSRGAEAAHFIGSRLGRAFTGWVQRSLQ) directs the protein to the mitochondrion. Residues Asp253 and His302 contribute to the active site. The active-site Amidino-cysteine intermediate is Cys406. Thr416 is modified (phosphothreonine).

This sequence belongs to the amidinotransferase family. In terms of assembly, homodimer.

It localises to the mitochondrion inner membrane. It catalyses the reaction L-arginine + glycine = guanidinoacetate + L-ornithine. Its pathway is amine and polyamine biosynthesis; creatine biosynthesis; creatine from L-arginine and glycine: step 1/2. In terms of biological role, catalyzes the biosynthesis of guanidinoacetate, the immediate precursor of creatine. Creatine plays a vital role in energy metabolism in muscle tissues. May play a role in embryonic and central nervous system development. This chain is Glycine amidinotransferase, mitochondrial, found in Gallus gallus (Chicken).